Consider the following 40-residue polypeptide: MTITPSLQGFFYSILFGAIVLGLLGGGFIFFSQKDKIVRR.

Residues 10 to 30 (FFYSILFGAIVLGLLGGGFIF) form a helical membrane-spanning segment.

Belongs to the PsbX family. Type 1 subfamily. In terms of assembly, PSII is composed of 1 copy each of membrane proteins PsbA, PsbB, PsbC, PsbD, PsbE, PsbF, PsbH, PsbI, PsbJ, PsbK, PsbL, PsbM, PsbT, PsbX, PsbY, PsbZ, Psb30/Ycf12, peripheral proteins PsbO, CyanoQ (PsbQ), PsbU, PsbV and a large number of cofactors. It forms dimeric complexes.

It localises to the cellular thylakoid membrane. Functionally, involved in the binding and/or turnover of quinones at the Q(B) site of photosystem II (PSII). PSII is a light-driven water plastoquinone oxidoreductase, using light energy to abstract electrons from H(2)O, generating a proton gradient subsequently used for ATP formation. The protein is Photosystem II reaction center protein X of Acaryochloris marina (strain MBIC 11017).